The primary structure comprises 241 residues: ATP synthase subunit a (241 aa).

5 consecutive transmembrane segments (helical) span residues 30–50 (GQVF…VLVG), 89–109 (LPFI…GALI), 128–148 (INTT…AGLS), 193–213 (LAVG…VMLL), and 214–234 (GLFT…FYIG).

It belongs to the ATPase A chain family. As to quaternary structure, F-type ATPases have 2 components, CF(1) - the catalytic core - and CF(0) - the membrane proton channel. CF(1) has five subunits: alpha(3), beta(3), gamma(1), delta(1), epsilon(1). CF(0) has four main subunits: a, b, b' and c.

Its subcellular location is the cellular thylakoid membrane. Functionally, key component of the proton channel; it plays a direct role in the translocation of protons across the membrane. This chain is ATP synthase subunit a, found in Synechococcus sp. (strain CC9605).